The sequence spans 245 residues: Orotidine 5'-phosphate decarboxylase (245 aa).

Substrate is bound by residues aspartate 22, lysine 44, 71 to 80 (DLKFHDIPNT), threonine 131, arginine 192, glutamine 201, glycine 221, and arginine 222. The active-site Proton donor is the lysine 73.

It belongs to the OMP decarboxylase family. Type 1 subfamily. As to quaternary structure, homodimer.

The enzyme catalyses orotidine 5'-phosphate + H(+) = UMP + CO2. Its pathway is pyrimidine metabolism; UMP biosynthesis via de novo pathway; UMP from orotate: step 2/2. Catalyzes the decarboxylation of orotidine 5'-monophosphate (OMP) to uridine 5'-monophosphate (UMP). This Salmonella gallinarum (strain 287/91 / NCTC 13346) protein is Orotidine 5'-phosphate decarboxylase.